The primary structure comprises 46 residues: Phoratoxin (46 aa).

3 disulfide bridges follow: cysteine 3/cysteine 40, cysteine 4/cysteine 32, and cysteine 16/cysteine 26. Histidine 46 bears the Blocked carboxyl end (His) mark.

The protein belongs to the plant thionin (TC 1.C.44) family.

The protein resides in the secreted. In terms of biological role, thionins are small plant proteins which are toxic to animal cells. They seem to exert their toxic effect at the level of the cell membrane. Their precise function is not known. The protein is Phoratoxin of Phoradendron leucarpum subsp. tomentosum (California mistletoe).